We begin with the raw amino-acid sequence, 500 residues long: Tektin-like protein 1 (500 aa).

Positions 198 to 229 form a coiled coil; that stretch reads MLTWEKEELKSMKRKMEADMEKSEALLKTLAS. Y372 carries the phosphotyrosine modification. Positions 420–444 form a coiled coil; that stretch reads DKLQRHISHVEKNLDELLSMRKKLT.

In terms of assembly, microtubule inner protein component of sperm flagellar doublet microtubules.

The protein localises to the cytoplasm. The protein resides in the cytoskeleton. Its subcellular location is the flagellum axoneme. In terms of biological role, microtubule inner protein (MIP) part of the dynein-decorated doublet microtubules (DMTs) in sperm flagellar axoneme, which is required for motile flagellum beating. Forms an extensive interaction network cross-linking the lumen of axonemal doublet microtubules. This is Tektin-like protein 1 from Bos taurus (Bovine).